A 111-amino-acid polypeptide reads, in one-letter code: Probable 4-amino-4-deoxy-L-arabinose-phosphoundecaprenol flippase subunit ArnE (111 aa).

3 helical membrane passes run 36–56 (IVLW…LWLL), 61–81 (VPVG…TLAA), and 88–108 (PVSP…VILG). Residues 40 to 109 (LGLALACLGL…IIGGIVILGS (70 aa)) form the EamA domain.

The protein belongs to the ArnE family. As to quaternary structure, heterodimer of ArnE and ArnF.

It localises to the cell inner membrane. It functions in the pathway bacterial outer membrane biogenesis; lipopolysaccharide biosynthesis. In terms of biological role, translocates 4-amino-4-deoxy-L-arabinose-phosphoundecaprenol (alpha-L-Ara4N-phosphoundecaprenol) from the cytoplasmic to the periplasmic side of the inner membrane. In Shigella flexneri, this protein is Probable 4-amino-4-deoxy-L-arabinose-phosphoundecaprenol flippase subunit ArnE.